Here is a 342-residue protein sequence, read N- to C-terminus: MTTMLTTPLSGWSQLSLSYLTLTVGALALVVVLYISIDRFPAPRWLSKKYQLIGQKDPASTTSLECPYSYIRQIYGHHHWAPFVHKLSPTLQHDDPAKYKMVLEIMDAIHLCLMLVDDISDGSDFRKGRPAAHRIYGPSETANRAYFRVTQILNQTTTGFPHLAPWLMQDLENILEGQDLSLVWRRDGLKNFPTAPSERAAAYQRMASLKTGSLFRLLGHLVLEDRSMDDTMTLVAWYSQLQNDCKNVYSTEYAKMKGAIAEDLCNGELSYPIVLAMNAPDGHWVELALQSPSPRNVRNALRAIRSDNVHQMCMAELAESSSSIQDWLALWGRKEKLDLKST.

Residues 17-37 form a helical membrane-spanning segment; the sequence is LSYLTLTVGALALVVVLYISI. His-110 is a binding site for isopentenyl diphosphate. Residues Asp-117 and Asp-121 each contribute to the Mg(2+) site. Arg-126 contributes to the dimethylallyl diphosphate binding site. An N-linked (GlcNAc...) asparagine glycan is attached at Asn-154. Lys-210 lines the dimethylallyl diphosphate pocket.

It belongs to the FPP/GGPP synthase family.

It localises to the membrane. The protein operates within secondary metabolite biosynthesis. Its function is as follows. Prenyl transferase; part of the gene cluster that mediates the biosynthesis of the indole diterpenes penitrems. The geranylgeranyl diphosphate (GGPP) synthase penG catalyzes the first step in penitrem biosynthesis via conversion of farnesyl pyrophosphate and isopentyl pyrophosphate into geranylgeranyl pyrophosphate (GGPP). Condensation of indole-3-glycerol phosphate with GGPP by the prenyl transferase penC then forms 3-geranylgeranylindole (3-GGI). Epoxidation by the FAD-dependent monooxygenase penM leads to a epoxidized-GGI that is substrate of the terpene cyclase penB for cyclization to yield paspaline. Paspaline is subsequently converted to 13-desoxypaxilline by the cytochrome P450 monooxygenase penP, the latter being then converted to paxilline by the cytochrome P450 monooxygenase penQ. Paxilline is converted to beta-paxitriol via C-10 ketoreduction by the short-chain dehydrogenase PC-15 which can be monoprenylated at the C-20 by the indole diterpene prenyltransferase penD. A two-step elimination (acetylation and elimination) process performed by the O-acetyltransferase PC-16 and the P.simplicissimum ptmI-ortholog not yet identified in P.crustosum, leads to the production of the prenylated form of penijanthine. The FAD-linked oxidoreductase ptmO then converts the prenylated form of penijanthine into PC-M5 which is in turn transformed into PC-M4 by the aromatic dimethylallyltransferase PC-22. A series of oxidation steps involving 4 cytochrome P450 monooxygenases (PC-21, PC-05, PC-23, PC-20) and a FAD-dependent monooxygenase (PC-14) are required for the transformation of PC-M4 to penitrems A and E. Synthesis of these final products is proposed to proceed via penitrems D and C (PC-21, PC-05, PC-14) and penitrems B and F (PC-21, PC-05, PC-14, PC-23). This is Prenyl transferase penC from Penicillium crustosum (Blue mold fungus).